The primary structure comprises 631 residues: Phosphomethylpyrimidine synthase (631 aa).

Substrate-binding positions include Asn239, Met268, Tyr297, His333, 353 to 355, 394 to 397, and Glu433; these read SRG and DGLR. His437 is a Zn(2+) binding site. Substrate is bound at residue Tyr460. Position 501 (His501) interacts with Zn(2+). [4Fe-4S] cluster contacts are provided by Cys581, Cys584, and Cys589.

Belongs to the ThiC family. Homodimer. [4Fe-4S] cluster serves as cofactor.

It carries out the reaction 5-amino-1-(5-phospho-beta-D-ribosyl)imidazole + S-adenosyl-L-methionine = 4-amino-2-methyl-5-(phosphooxymethyl)pyrimidine + CO + 5'-deoxyadenosine + formate + L-methionine + 3 H(+). The protein operates within cofactor biosynthesis; thiamine diphosphate biosynthesis. Functionally, catalyzes the synthesis of the hydroxymethylpyrimidine phosphate (HMP-P) moiety of thiamine from aminoimidazole ribotide (AIR) in a radical S-adenosyl-L-methionine (SAM)-dependent reaction. The protein is Phosphomethylpyrimidine synthase of Salmonella paratyphi C (strain RKS4594).